A 332-amino-acid chain; its full sequence is Geranylgeranyl pyrophosphate synthase 2 (332 aa).

Isopentenyl diphosphate is bound by residues lysine 55, arginine 58, and histidine 87. Mg(2+)-binding residues include aspartate 94 and aspartate 98. Arginine 103 contributes to the dimethylallyl diphosphate binding site. Isopentenyl diphosphate is bound at residue arginine 104. 3 residues coordinate dimethylallyl diphosphate: lysine 181, threonine 182, and glutamine 218. Aspartate 221 contacts Mg(2+). Asparagine 225, lysine 235, and lysine 245 together coordinate dimethylallyl diphosphate.

Belongs to the FPP/GGPP synthase family. Mg(2+) is required as a cofactor.

It carries out the reaction isopentenyl diphosphate + dimethylallyl diphosphate = (2E)-geranyl diphosphate + diphosphate. It catalyses the reaction isopentenyl diphosphate + (2E)-geranyl diphosphate = (2E,6E)-farnesyl diphosphate + diphosphate. The enzyme catalyses isopentenyl diphosphate + (2E,6E)-farnesyl diphosphate = (2E,6E,10E)-geranylgeranyl diphosphate + diphosphate. In terms of biological role, geranylgeranyl pyrophosphate synthase; part of the gene cluster 3 that mediates the biosynthesis of an isoprenoid secondary metabolite. In Zymoseptoria tritici (strain CBS 115943 / IPO323) (Speckled leaf blotch fungus), this protein is Geranylgeranyl pyrophosphate synthase 2 (GGS2).